A 364-amino-acid chain; its full sequence is RNA polymerase II holoenzyme cyclin-like subunit (364 aa).

The region spanning 53–143 is the Cyclin N-terminal domain; it reads QQINRLSKRI…VGECEFSLIS (91 aa). A disordered region spans residues 268 to 303; sequence PGFGSQGSQQQAGFSQGNSQGSLQGDSAAAEPKKVT. Positions 273–289 are enriched in low complexity; it reads QGSQQQAGFSQGNSQGS.

Belongs to the cyclin family. Cyclin C subfamily. Component of the SRB8-11 complex, a regulatory module of the Mediator complex.

It localises to the nucleus. Functionally, component of the SRB8-11 complex. The SRB8-11 complex is a regulatory module of the Mediator complex which is itself involved in regulation of basal and activated RNA polymerase II-dependent transcription. The SRB8-11 complex may be involved in the transcriptional repression of a subset of genes regulated by Mediator. It may inhibit the association of the Mediator complex with RNA polymerase II to form the holoenzyme complex. The SRB8-11 complex phosphorylates the C-terminal domain (CTD) of the largest subunit of RNA polymerase II. The sequence is that of RNA polymerase II holoenzyme cyclin-like subunit (SSN8) from Chaetomium globosum (strain ATCC 6205 / CBS 148.51 / DSM 1962 / NBRC 6347 / NRRL 1970) (Soil fungus).